An 868-amino-acid polypeptide reads, in one-letter code: DNA mismatch repair protein MutS (868 aa).

621-628 lines the ATP pocket; the sequence is GPNMGGKS. Residues 803-852 are disordered; that stretch reads LESGDGGDTGSAQLPLFGPEPVFPPPAQPEPEPDPIREAVENLDPDGLTP. Residues 823–832 are compositionally biased toward pro residues; sequence PVFPPPAQPE.

The protein belongs to the DNA mismatch repair MutS family.

Functionally, this protein is involved in the repair of mismatches in DNA. It is possible that it carries out the mismatch recognition step. This protein has a weak ATPase activity. The sequence is that of DNA mismatch repair protein MutS from Halorhodospira halophila (strain DSM 244 / SL1) (Ectothiorhodospira halophila (strain DSM 244 / SL1)).